We begin with the raw amino-acid sequence, 507 residues long: Heat shock 70 kDa protein 14-B (507 aa).

This sequence belongs to the heat shock protein 70 family. As to quaternary structure, component of ribosome-associated complex (RAC).

It localises to the cytoplasm. It is found in the cytosol. Functionally, component of the ribosome-associated complex (RAC), a complex involved in folding or maintaining nascent polypeptides in a folding-competent state. This Xenopus laevis (African clawed frog) protein is Heat shock 70 kDa protein 14-B (hspa14-b).